A 352-amino-acid chain; its full sequence is Spermidine/putrescine import ATP-binding protein PotA (352 aa).

The region spanning 7–237 (IRLENVTKSF…PVNAFVADFI (231 aa)) is the ABC transporter domain. Position 39-46 (39-46 (GPSGCGKT)) interacts with ATP.

The protein belongs to the ABC transporter superfamily. Spermidine/putrescine importer (TC 3.A.1.11.1) family. In terms of assembly, the complex is composed of two ATP-binding proteins (PotA), two transmembrane proteins (PotB and PotC) and a solute-binding protein (PotD).

The protein resides in the cell membrane. The catalysed reaction is ATP + H2O + polyamine-[polyamine-binding protein]Side 1 = ADP + phosphate + polyamineSide 2 + [polyamine-binding protein]Side 1.. Its function is as follows. Part of the ABC transporter complex PotABCD involved in spermidine/putrescine import. Responsible for energy coupling to the transport system. This Acetivibrio thermocellus (strain ATCC 27405 / DSM 1237 / JCM 9322 / NBRC 103400 / NCIMB 10682 / NRRL B-4536 / VPI 7372) (Clostridium thermocellum) protein is Spermidine/putrescine import ATP-binding protein PotA.